We begin with the raw amino-acid sequence, 103 residues long: Cystatin-A (103 aa).

Position 1 is an N-acetylmethionine (Met1). The Secondary area of contact signature appears at 52–56 (QVVAG).

Belongs to the cystatin family.

It is found in the cytoplasm. Its function is as follows. This is an intracellular thiol proteinase inhibitor. The sequence is that of Cystatin-A (Csta) from Rattus norvegicus (Rat).